A 558-amino-acid polypeptide reads, in one-letter code: MSLTAALWVAVFGKCGPPPDLPYALPASEMNQTDFESHTTLRYNCRPGYSRASSSQSLYCKPLGKWQINIACVKKSCRNPGDLQNGKVEVKTDFLFGSQIEFSCSEGYILIGSSTSYCEIQGKGVSWSDPLPECVIAKCGMPPDISNGKHNGREEEFFTYRSSVTYKCDPDFTLLGNASITCTVVNKTVGVWSPSPPTCERIICPWPKVLHGTINSGFKHTYKYKDSVRFVCQKGFVLRGSGVIHCEADGSWSPVPVCELNSCTDIPDIPNAALITSPRPRKEDVYPVGTVLRYICRPGYEPATRQPMTVICQKDLSWSMLRGCKEICCPVPDPKSVRVIQHEKAHPDNDCTYFFGDEVSYTCQNDIMLTATCKSDGTWHPRTPSCHQSCDFPPAIAHGRYTKSSSYYVRTQVTYECEEGYRLVGEATISCWYSQWTPAAPQCKALCRKPEIGNGVLSTNKDQYVETENVTIQCDSGFVMLGSQSITCSENGTWYPKVSRCEQEVPKDCEHVFAGKKLMQCLPNSNDVKMALEVYKLTLEIKQLQLQIDKAKHVDREL.

Positions 1–13 (MSLTAALWVAVFG) are cleaved as a signal peptide. Sushi domains lie at 14–74 (KCGP…ACVK), 75–136 (KSCR…ECVI), 137–201 (AKCG…TCER), 202–260 (IICP…VCEL), 261–326 (NSCT…GCKE), 327–388 (ICCP…SCHQ), 389–445 (SCDF…QCKA), and 446–503 (LCRK…RCEQ). 16 cysteine pairs are disulfide-bonded: Cys-15/Cys-60, Cys-45/Cys-72, Cys-77/Cys-118, Cys-104/Cys-134, Cys-139/Cys-182, Cys-168/Cys-199, Cys-204/Cys-246, Cys-232/Cys-258, Cys-263/Cys-312, Cys-296/Cys-324, Cys-329/Cys-373, Cys-363/Cys-386, Cys-390/Cys-431, Cys-417/Cys-443, Cys-447/Cys-488, and Cys-474/Cys-501. A glycan (N-linked (GlcNAc...) asparagine) is linked at Asn-31. N-linked (GlcNAc...) asparagine glycosylation is found at Asn-177 and Asn-186. 2 N-linked (GlcNAc...) asparagine glycosylation sites follow: Asn-469 and Asn-491.

Disulfide-linked complex of alpha and beta chains.

The protein localises to the secreted. Controls the classical pathway of complement activation. It binds as a cofactor to C3b/C4b inactivator (C3bINA), which then hydrolyzes the complement fragment C4b. It also accelerates the degradation of the C4bC2a complex (C3 convertase) by dissociating the complement fragment C2a. Alpha chain binds C4b. It also interacts with anticoagulant protein S and with serum amyloid P component. The protein is C4b-binding protein alpha chain (C4bpa) of Rattus norvegicus (Rat).